The primary structure comprises 418 residues: Lysophosphatidic acid phosphatase type 6 (418 aa).

A mitochondrion-targeting transit peptide spans Met-1–Ala-25. The segment at Arg-51–Arg-161 is substrate binding. His-52 serves as the catalytic Nucleophile. The active-site Proton donor is the Asp-327.

Belongs to the histidine acid phosphatase family. In terms of assembly, monomer.

It localises to the mitochondrion. The enzyme catalyses a phosphate monoester + H2O = an alcohol + phosphate. It catalyses the reaction 1-(9Z-octadecenoyl)-sn-glycero-3-phosphate + H2O = 1-(9Z-octadecenoyl)-sn-glycerol + phosphate. Its function is as follows. Hydrolyzes lysophosphatidic acid (LPA) containing a medium length fatty acid chain to the corresponding monoacylglycerol. Has highest activity with lysophosphatidic acid containing myristate (C14:0), monounsaturated oleate (C18:1) or palmitate (C16:0), and lower activity with C18:0 and C6:0 lysophosphatidic acid. The sequence is that of Lysophosphatidic acid phosphatase type 6 (Acp6) from Mus musculus (Mouse).